Here is a 453-residue protein sequence, read N- to C-terminus: Putative folate transporter 2 (453 aa).

Helical transmembrane passes span 41–64, 76–96, 108–126, 132–156, 176–195, 201–220, 241–260, 280–300, 312–330, 346–366, and 416–437; these read IVVY…YYLF, SLIL…ALIT, PYLF…SLAL, IQAT…EALV, IASK…YFLE, YIFM…CLFL, FINT…YMSG, SFMG…IIVY, TLIF…PIIL, VLSG…PLFI, and LSMY…VPLL.

Belongs to the major facilitator superfamily. Folate-biopterin transporter (TC 2.A.71) family.

It localises to the plastid. The protein localises to the apicoplast. Its subcellular location is the membrane. Its function is as follows. Putative folate transporter. Required for sporogony of malaria parasites and host switching. The protein is Putative folate transporter 2 of Plasmodium berghei (strain Anka).